Here is a 770-residue protein sequence, read N- to C-terminus: Low-density lipoprotein receptor-related protein 3 (770 aa).

The signal sequence occupies residues 1 to 36; it reads MEKRAAAGLEGAPGARAQLAVVCLVNIFLTGRLSSA. At 37–496 the chain is on the extracellular side; it reads VPALAACSGK…HGCLAAVPRK (460 aa). 9 disulfide bridges follow: cysteine 43/cysteine 72, cysteine 99/cysteine 120, cysteine 166/cysteine 178, cysteine 173/cysteine 191, cysteine 185/cysteine 200, cysteine 212/cysteine 227, cysteine 219/cysteine 240, cysteine 234/cysteine 249, and cysteine 254/cysteine 282. Positions 43–159 constitute a CUB 1 domain; sequence CSGKLEQHTE…QGFRLSYIRG (117 aa). N-linked (GlcNAc...) asparagine glycosylation is present at asparagine 71. 2 consecutive LDL-receptor class A domains span residues 165–201 and 211–250; these read SCQA…GNCS and LCPG…AGCP. Asparagine 199 carries N-linked (GlcNAc...) asparagine glycosylation. One can recognise a CUB 2 domain in the interval 254–365; the sequence is CGRRLGSFYG…HGFNATYQVK (112 aa). The N-linked (GlcNAc...) asparagine glycan is linked to asparagine 359. LDL-receptor class A domains are found at residues 415–453 and 454–490; these read ACPP…KNCF and SCQP…HGCL. 6 disulfides stabilise this stretch: cysteine 416/cysteine 430, cysteine 423/cysteine 443, cysteine 437/cysteine 452, cysteine 455/cysteine 467, cysteine 462/cysteine 480, and cysteine 474/cysteine 489. A helical transmembrane segment spans residues 497 to 517; sequence VITAALIGSLVCGLLLVIALG. At 518 to 770 the chain is on the cytoplasmic side; the sequence is CAFKLYSLRT…ASDDEALLVC (253 aa). The tract at residues 635-770 is disordered; the sequence is LGDGFLQPAP…ASDDEALLVC (136 aa). Residues 689–707 are compositionally biased toward basic and acidic residues; that stretch reads RDPECRPVDKDRKVCREPL. Residues 729–738 are compositionally biased toward polar residues; sequence QVSTASSTLG. A compositionally biased stretch (acidic residues) spans 761–770; that stretch reads ASDDEALLVC.

This sequence belongs to the LDLR family. As to quaternary structure, binds GGA1 and GGA2. Widely expressed. Highly expressed in skeletal muscle and ovary. Expressed at intermediate level in heart, brain, liver, pancreas, prostate and small intestine. Weakly expressed in testis, colon and leukocyte.

The protein localises to the membrane. The protein resides in the coated pit. Functionally, probable receptor, which may be involved in the internalization of lipophilic molecules and/or signal transduction. Its precise role is however unclear, since it does not bind to very low density lipoprotein (VLDL) or to LRPAP1 in vitro. The polypeptide is Low-density lipoprotein receptor-related protein 3 (LRP3) (Homo sapiens (Human)).